A 581-amino-acid chain; its full sequence is Arginine--tRNA ligase (581 aa).

The short motif at 126-136 is the 'HIGH' region element; it reads PNLAKEMHVGH.

The protein belongs to the class-I aminoacyl-tRNA synthetase family. Monomer.

Its subcellular location is the cytoplasm. It carries out the reaction tRNA(Arg) + L-arginine + ATP = L-arginyl-tRNA(Arg) + AMP + diphosphate. This is Arginine--tRNA ligase from Shewanella sp. (strain ANA-3).